Here is an 84-residue protein sequence, read N- to C-terminus: uncharacterized protein (84 aa).

Residues 7–23 (AFSGVIALYGGYLYLRL) form a helical membrane-spanning segment.

The protein localises to the membrane. This is an uncharacterized protein from Haemophilus influenzae (strain ATCC 51907 / DSM 11121 / KW20 / Rd).